The chain runs to 699 residues: D-(-)-3-hydroxybutyrate oligomer hydrolase (699 aa).

A signal peptide spans 1-33 (MTAIRGGSRRAPGLALALLGGVLLGACHGDENA). The active-site Charge relay system is serine 311.

Belongs to the D-(-)-3-hydroxybutyrate oligomer hydrolase family.

The protein resides in the secreted. It carries out the reaction (3R)-hydroxybutanoate dimer + H2O = 2 (R)-3-hydroxybutanoate + H(+). Its pathway is lipid metabolism; butanoate metabolism. Functionally, participates in the degradation of poly-3-hydroxybutyrate (PHB). It works downstream of poly(3-hydroxybutyrate) depolymerase, hydrolyzing D(-)-3-hydroxybutyrate oligomers of various length (3HB-oligomers) into 3HB-monomers. In Burkholderia mallei (strain NCTC 10247), this protein is D-(-)-3-hydroxybutyrate oligomer hydrolase.